A 142-amino-acid polypeptide reads, in one-letter code: Relaxin-3 (142 aa).

An N-terminal signal peptide occupies residues 1 to 25 (MARYMLLLLLAVWVLTGELWPGAEA). 3 disulfides stabilise this stretch: Cys35–Cys129, Cys47–Cys142, and Cys128–Cys133. A propeptide spans 55–118 (SDILAHEAMG…GTPGVLRGSR (64 aa)) (connecting peptide).

It belongs to the insulin family. Heterodimer of a B chain and an A chain linked by two disulfide bonds.

It localises to the secreted. Functionally, may play a role in neuropeptide signaling processes. Ligand for LGR7, RXFP3 and RXFP4. The chain is Relaxin-3 (RLN3) from Homo sapiens (Human).